We begin with the raw amino-acid sequence, 120 residues long: MITKADKNAVRKKRHARVRRTITGTAARPRLNVFRSSKHIYVQLIDDAAQTTLVSASSKDKALDLTNGGNVEAAKAVGKLAAERALEKGIDTVVFDRGGYLYHGRVKAVAEAAREAGLKF.

Belongs to the universal ribosomal protein uL18 family. In terms of assembly, part of the 50S ribosomal subunit; part of the 5S rRNA/L5/L18/L25 subcomplex. Contacts the 5S and 23S rRNAs.

In terms of biological role, this is one of the proteins that bind and probably mediate the attachment of the 5S RNA into the large ribosomal subunit, where it forms part of the central protuberance. In Exiguobacterium sp. (strain ATCC BAA-1283 / AT1b), this protein is Large ribosomal subunit protein uL18.